We begin with the raw amino-acid sequence, 192 residues long: Xanthine phosphoribosyltransferase (192 aa).

Leucine 20 and asparagine 27 together coordinate xanthine. 128–132 (ANGQA) serves as a coordination point for 5-phospho-alpha-D-ribose 1-diphosphate. Residue lysine 156 coordinates xanthine.

This sequence belongs to the purine/pyrimidine phosphoribosyltransferase family. Xpt subfamily. Homodimer.

It localises to the cytoplasm. The catalysed reaction is XMP + diphosphate = xanthine + 5-phospho-alpha-D-ribose 1-diphosphate. The protein operates within purine metabolism; XMP biosynthesis via salvage pathway; XMP from xanthine: step 1/1. In terms of biological role, converts the preformed base xanthine, a product of nucleic acid breakdown, to xanthosine 5'-monophosphate (XMP), so it can be reused for RNA or DNA synthesis. This is Xanthine phosphoribosyltransferase from Listeria innocua serovar 6a (strain ATCC BAA-680 / CLIP 11262).